A 222-amino-acid polypeptide reads, in one-letter code: MNVGSNEEAETLRHLFGVRWPLVVRYVEWLSTAGLERGLIGPAEVDRLWERHIANCAALAPLIPVDQRVIDVGSGAGLPGIVLALARPDLEVLLIEAMSRRTAFLREVVADLGLRDVTVENSRAENVACTAPVVTARAVAPLPRLVKNVAHLLEPGGVLLALKGARVWQEVHAAEHLLAKLGYQPGVEVLTVRAVAGQLTVQRDADASNDRRWATVVRVIKQ.

S-adenosyl-L-methionine contacts are provided by residues G73, L78, 124-125, and R137; that span reads AE.

It belongs to the methyltransferase superfamily. RNA methyltransferase RsmG family.

It localises to the cytoplasm. Functionally, specifically methylates the N7 position of guanine in position 518 of 16S rRNA. The sequence is that of Ribosomal RNA small subunit methyltransferase G from Acidothermus cellulolyticus (strain ATCC 43068 / DSM 8971 / 11B).